The chain runs to 187 residues: Large ribosomal subunit protein uL5 (187 aa).

The protein belongs to the universal ribosomal protein uL5 family. As to quaternary structure, part of the 50S ribosomal subunit; part of the 5S rRNA/L5/L18/L25 subcomplex. Contacts the 5S rRNA and the P site tRNA. Forms a bridge to the 30S subunit in the 70S ribosome.

Functionally, this is one of the proteins that bind and probably mediate the attachment of the 5S RNA into the large ribosomal subunit, where it forms part of the central protuberance. In the 70S ribosome it contacts protein S13 of the 30S subunit (bridge B1b), connecting the 2 subunits; this bridge is implicated in subunit movement. Contacts the P site tRNA; the 5S rRNA and some of its associated proteins might help stabilize positioning of ribosome-bound tRNAs. This Mycobacterium bovis (strain BCG / Tokyo 172 / ATCC 35737 / TMC 1019) protein is Large ribosomal subunit protein uL5.